Consider the following 90-residue polypeptide: Acylphosphatase (90 aa).

An Acylphosphatase-like domain is found at A3–Y90. Catalysis depends on residues R18 and N36.

This sequence belongs to the acylphosphatase family.

It catalyses the reaction an acyl phosphate + H2O = a carboxylate + phosphate + H(+). The protein is Acylphosphatase (acyP) of Pediococcus pentosaceus (strain ATCC 25745 / CCUG 21536 / LMG 10740 / 183-1w).